A 529-amino-acid polypeptide reads, in one-letter code: MIFVGLSHKTAPIEVRERLAIGRDRLPEVLARLTAHPAIGEALVLSTCNRVEIYASPRQQAPAPPRPGSAPPPSDEELSRNNEALRAAVATLVGLGGDAVRGHLAGRVGSDAVLHLFRVAASLDSMVVGEPQILGQMKEAIEVARGAKTLGVRLGRAAHRAIKVGKRVRTETAIGAGQVSVSSVAIDLARQIFADLAGHTALLIGAGDMAEAASKLLVRAGARLIVVNRSPDRAAALAREVGGEPRPWADLERSVIDADIVISSTSSPNYVVTPDLVRRARKARKGRSLFLIDIAVPRDIDPAVNKLDSVYLYDVDDLSQIVAESVEGRAAEAARAEAIVADEAQAFEAWTLERALTPTIVGLRARTRSILVAEVERSLSGKLRHLGVAERQALAMMIDAATNKLLHVPTTRLRAMASDPRVAEHVDSLRELFDIDGAPPENAAASALAEGELRGAVDGPPTPRSARGAAPPASGARGGGSPRHADPRPQAAEDNGVYARQPGGRPAEAGVMAVANPAAAVSAAGLKGA.

Residue 47–50 (TCNR) participates in substrate binding. The Nucleophile role is filled by cysteine 48. The segment at 56–80 (SPRQQAPAPPRPGSAPPPSDEELSR) is disordered. The segment covering 62 to 73 (PAPPRPGSAPPP) has biased composition (pro residues). Substrate contacts are provided by residues serine 125, 130-132 (EPQ), and glutamine 136. Position 205 to 210 (205 to 210 (GAGDMA)) interacts with NADP(+). The segment at 454-505 (RGAVDGPPTPRSARGAAPPASGARGGGSPRHADPRPQAAEDNGVYARQPGGR) is disordered. Residues 464-475 (RSARGAAPPASG) show a composition bias toward low complexity.

This sequence belongs to the glutamyl-tRNA reductase family. Homodimer.

It carries out the reaction (S)-4-amino-5-oxopentanoate + tRNA(Glu) + NADP(+) = L-glutamyl-tRNA(Glu) + NADPH + H(+). Its pathway is porphyrin-containing compound metabolism; protoporphyrin-IX biosynthesis; 5-aminolevulinate from L-glutamyl-tRNA(Glu): step 1/2. In terms of biological role, catalyzes the NADPH-dependent reduction of glutamyl-tRNA(Glu) to glutamate 1-semialdehyde (GSA). This chain is Glutamyl-tRNA reductase, found in Sorangium cellulosum (strain So ce56) (Polyangium cellulosum (strain So ce56)).